A 460-amino-acid polypeptide reads, in one-letter code: MLKIYNTLTRQKEEFKPITAGKVGMYVCGVTIYDLCHIGHGRTFVSFDVVSRYLRYLGYDLTFVRNITDIDDKIIKRAAENGESCESLTERLIGDMHADFDALNMKRPDVEPRATQFIAEIIELVEKLIERGFAYVADNGDVMFEVGKFDEYGKLSKQDLDQLQAGARVDIETAKRSPLDFVLWKMSKPGEPTWESPWGPGRPGWHIECSAMNSTILGDHFDIHGGGSDLQFPHHENEIAQSCCAHDTKYVNTWMHSGMVMVDREKMSKSLGNFFTIRDVLGHYDAETVRYFLMSGHYRSQLNYSEDNLNQARASLERLYTSLRGLDLNAAPAGGEEYVSRFTAAMNDDFNTPEAYSVLFDMAREVNRLKTESVEKASELGALMRELADVIGILYQDPEAFLKGNAGNDDEVAEIEALIKLRNDSRASKDWANADMARDKLTEMGIVLEDGPEGTTWRRK.

Zn(2+) is bound at residue cysteine 28. A 'HIGH' region motif is present at residues 30–40 (VTIYDLCHIGH). Residues cysteine 209, histidine 234, and glutamate 238 each coordinate Zn(2+). Positions 266–270 (KMSKS) match the 'KMSKS' region motif. Lysine 269 provides a ligand contact to ATP.

It belongs to the class-I aminoacyl-tRNA synthetase family. As to quaternary structure, monomer. Zn(2+) is required as a cofactor.

It localises to the cytoplasm. The enzyme catalyses tRNA(Cys) + L-cysteine + ATP = L-cysteinyl-tRNA(Cys) + AMP + diphosphate. In Vibrio parahaemolyticus serotype O3:K6 (strain RIMD 2210633), this protein is Cysteine--tRNA ligase.